A 93-amino-acid chain; its full sequence is MIMDLQFFSHHKGGGSTANGRNSAGRRLGTKAADGSVVTAGSILYRQRGTHINPGENVGRGNDDTLFALVDGVVKFERLGRDKRKVSVYPVAE.

A propeptide spanning residues 1-8 (MIMDLQFF) is cleaved from the precursor. A disordered region spans residues 8–29 (FSHHKGGGSTANGRNSAGRRLG).

Belongs to the bacterial ribosomal protein bL27 family. In terms of processing, the N-terminus is cleaved by ribosomal processing cysteine protease Prp.

The chain is Large ribosomal subunit protein bL27 from Limosilactobacillus fermentum (strain NBRC 3956 / LMG 18251) (Lactobacillus fermentum).